A 205-amino-acid polypeptide reads, in one-letter code: Dephospho-CoA kinase (205 aa).

The DPCK domain maps to 13-205 (RIGLTGGIAS…KWINTIREIL (193 aa)). ATP is bound at residue 21–26 (ASGKST).

The protein belongs to the CoaE family.

Its subcellular location is the cytoplasm. It carries out the reaction 3'-dephospho-CoA + ATP = ADP + CoA + H(+). Its pathway is cofactor biosynthesis; coenzyme A biosynthesis; CoA from (R)-pantothenate: step 5/5. In terms of biological role, catalyzes the phosphorylation of the 3'-hydroxyl group of dephosphocoenzyme A to form coenzyme A. This Prochlorococcus marinus (strain MIT 9312) protein is Dephospho-CoA kinase.